The primary structure comprises 531 residues: Beta-hexosaminidase subunit beta (531 aa).

The signal sequence occupies residues 1–21; sequence MEVLPGLLRLLAALVVAERWA. C67 and C111 are oxidised to a cystine. N120, N164, and N301 each carry an N-linked (GlcNAc...) asparagine glycan. Cystine bridges form between C283-C334 and C508-C525. The active-site Proton donor is E329.

Belongs to the glycosyl hydrolase 20 family. In terms of assembly, there are 3 forms of beta-hexosaminidase: hexosaminidase A is a heterodimer composed of one subunit alpha and one subunit beta (chain A and B); hexosaminidase B is a homodimer of two beta subunits (two chains A and B); hexosaminidase S is a homodimer of two alpha subunits. The composition of the dimer (isozyme A versus isozyme S) has a significant effect on the substrate specificity of the alpha subunit active site.

Its subcellular location is the lysosome. It is found in the cytoplasmic vesicle. The protein resides in the secretory vesicle. The protein localises to the cortical granule. It carries out the reaction Hydrolysis of terminal non-reducing N-acetyl-D-hexosamine residues in N-acetyl-beta-D-hexosaminides.. It catalyses the reaction N-acetyl-beta-D-galactosaminyl-(1-&gt;4)-beta-D-3-sulfogalactosyl-(1-&gt;4)-beta-D-glucosyl-(1&lt;-&gt;1')-ceramide + H2O = a beta-D-3-sulfogalactosyl-(1-&gt;4)-beta-D-glucosyl-(1&lt;-&gt;1')-ceramide + N-acetyl-beta-D-galactosamine. The enzyme catalyses a ganglioside GM2 (d18:1(4E)) + H2O = a ganglioside GM3 (d18:1(4E)) + N-acetyl-beta-D-galactosamine. The catalysed reaction is a ganglioside GM2 + H2O = a ganglioside GM3 + N-acetyl-beta-D-galactosamine. It carries out the reaction beta-D-GalNAc-(1-&gt;4)-alpha-L-IdoA-(1-&gt;3)-beta-D-GalNAc-4-sulfate-(1-&gt;4)-alpha-L-IdoA-(1-&gt;3)-D-GalNAc-4-sulfate + H2O = alpha-L-IdoA-(1-&gt;3)-beta-D-GalNAc-4-sulfate-(1-&gt;4)-alpha-L-IdoA-(1-&gt;3)-D-GalNAc-4-sulfate + N-acetyl-D-galactosamine. It catalyses the reaction N-acetyl-beta-D-6-sulfogalactosaminyl-(1-&gt;4)-alpha-L-iduronyl-(1-&gt;3)-N-acetyl-D-6-sulfogalactosamine + H2O = alpha-L-iduronyl-(1-&gt;3)-N-acetyl-D-6-sulfogalactosamine + N-acetyl-D-6-sulfogalactosamine. With respect to regulation, addition of GM2A stimulates the hydrolysis of sulfated glycosphingolipid SM2 and the ganglioside GM2. Its function is as follows. Hydrolyzes the non-reducing end N-acetyl-D-hexosamine and/or sulfated N-acetyl-D-hexosamine of glycoconjugates, such as the oligosaccharide moieties from proteins and neutral glycolipids, or from certain mucopolysaccharides. The isozyme B does not hydrolyze each of these substrates, however hydrolyzes efficiently neutral oligosaccharide. Only the isozyme A is responsible for the degradation of GM2 gangliosides in the presence of GM2A. During fertilization is responsible, at least in part, for the zona block to polyspermy. Present in the cortical granules of non-activated oocytes, is exocytosed during the cortical reaction in response to oocyte activation and inactivates the sperm galactosyltransferase-binding site, accounting for the block in sperm binding to the zona pellucida. The polypeptide is Beta-hexosaminidase subunit beta (Sus scrofa (Pig)).